The sequence spans 486 residues: Probable peptidoglycan glycosyltransferase FtsW (486 aa).

Residues 1–50 (MAGAARDRAFLDHFGGAGADRPCHVEGALMNDMSRQATRLDAIGGRYDPW) are Cytoplasmic-facing. A helical transmembrane segment spans residues 51 to 71 (LLGAAVTLASLGVVMVASSSI). The Periplasmic segment spans residues 72–77 (ELEASP). Residues 78 to 98 (FYYLTRHLLFLGGGIALAFWA) traverse the membrane as a helical segment. Topologically, residues 99-112 (MRTELKTIEQHNQM) are cytoplasmic. Residues 113-133 (LLLACFVLLVVVFVPGLGSTV) form a helical membrane-spanning segment. Residues 134 to 141 (NGAKRWIN) are Periplasmic-facing. The helical transmembrane segment at 142–162 (LGVSRFQVVESVKVFYIIWLA) threads the bilayer. The Cytoplasmic segment spans residues 163–174 (SYLVRFRDEVNA). Residues 175-195 (TWQAMLKPVFVVGLLVGLLLL) form a helical membrane-spanning segment. The Periplasmic segment spans residues 196–199 (QPDF). The helical transmembrane segment at 200–220 (GSSMLLLSVTACMLVLGGAPI) threads the bilayer. The Cytoplasmic portion of the chain corresponds to 221–222 (GR). The helical transmembrane segment at 223–243 (IILPILLLLPALVALVIFEPY) threads the bilayer. At 244–298 (RMRRVTSFMDPWVDQLGSGYQLSNALMAIGRGQWTGVGLGASVQKLNYLPESHTD) the chain is on the periplasmic side. The chain crosses the membrane as a helical span at residues 299-319 (FIFSVIAEELGFVGVCGVIGL). The Cytoplasmic segment spans residues 320–342 (YALLVGRAFWLGMRCVEMKRHFS). Residues 343–363 (GYIAFGIGLWIAMQSFVSIGV) form a helical membrane-spanning segment. Residues 364–374 (NLGILPTKGLT) are Periplasmic-facing. A helical transmembrane segment spans residues 375–395 (LPLISSGGSSVLMTCLAMGVL). The Cytoplasmic segment spans residues 396-486 (LRVSYEADRA…RVEPTFGRIA (91 aa)).

It belongs to the SEDS family. FtsW subfamily.

Its subcellular location is the cell inner membrane. It carries out the reaction [GlcNAc-(1-&gt;4)-Mur2Ac(oyl-L-Ala-gamma-D-Glu-L-Lys-D-Ala-D-Ala)](n)-di-trans,octa-cis-undecaprenyl diphosphate + beta-D-GlcNAc-(1-&gt;4)-Mur2Ac(oyl-L-Ala-gamma-D-Glu-L-Lys-D-Ala-D-Ala)-di-trans,octa-cis-undecaprenyl diphosphate = [GlcNAc-(1-&gt;4)-Mur2Ac(oyl-L-Ala-gamma-D-Glu-L-Lys-D-Ala-D-Ala)](n+1)-di-trans,octa-cis-undecaprenyl diphosphate + di-trans,octa-cis-undecaprenyl diphosphate + H(+). Its pathway is cell wall biogenesis; peptidoglycan biosynthesis. Functionally, peptidoglycan polymerase that is essential for cell division. The polypeptide is Probable peptidoglycan glycosyltransferase FtsW (Xanthomonas oryzae pv. oryzae (strain KACC10331 / KXO85)).